Here is a 392-residue protein sequence, read N- to C-terminus: Fasciculation and elongation protein zeta-1 (392 aa).

A disordered region spans residues 1 to 36 (MEAPLVSLDEEFEDIRPSCTEEPEEKPQCLYGTSPH). The residue at position 58 (S58) is a Phosphoserine. A disordered region spans residues 175 to 196 (MQNSPDPEEEEEVLEEEDGGEI). Residues 180–194 (DPEEEEEVLEEEDGG) are compositionally biased toward acidic residues. Positions 230–298 (SELTELLDRV…KKRRKEKGLS (69 aa)) form a coiled coil. 2 positions are modified to phosphoserine: S298 and S316.

This sequence belongs to the zygin family. Homodimer. Interacts with the NH2-terminal variable region (V1) of PKC zeta and weakly with that of PKC epsilon. Interacts with UBE4B and SAP30L. Interacts with SCOC and ULK1; SCOC interferes with ULK1-binding to FEZ1. Directly interacts with SCOC and UVRAG. Stabilizes the interaction between SCOC and UVRAG during amino acid starvation. Post-translationally, phosphorylated by protein kinase C zeta; which enhances interaction with UBE4B and polyubiquitination. Polyubiquitinated in a UBE4B-dependent manner; which does not lead to proteasomal degradation and may be important for neurogenic activity. Polyubiquitin linkage seems to be mainly through Lys-26.

It localises to the cytoplasm. The protein resides in the cytoskeleton. It is found in the microtubule organizing center. Its subcellular location is the centrosome. The protein localises to the cell membrane. Its function is as follows. May be involved in axonal outgrowth as component of the network of molecules that regulate cellular morphology and axon guidance machinery. May participate in the transport of mitochondria and other cargos along microtubules. In Mus musculus (Mouse), this protein is Fasciculation and elongation protein zeta-1 (Fez1).